The primary structure comprises 271 residues: 5-deoxy-glucuronate isomerase (271 aa).

This sequence belongs to the isomerase IolB family.

It catalyses the reaction 5-deoxy-D-glucuronate = 5-dehydro-2-deoxy-D-gluconate. The protein operates within polyol metabolism; myo-inositol degradation into acetyl-CoA; acetyl-CoA from myo-inositol: step 4/7. Its function is as follows. Involved in the isomerization of 5-deoxy-glucuronate (5DG) to 5-dehydro-2-deoxy-D-gluconate (DKG or 2-deoxy-5-keto-D-gluconate). The chain is 5-deoxy-glucuronate isomerase from Bacillus subtilis subsp. natto.